The primary structure comprises 114 residues: Large ribosomal subunit protein bL17 (114 aa).

Belongs to the bacterial ribosomal protein bL17 family. In terms of assembly, part of the 50S ribosomal subunit. Contacts protein L32.

This is Large ribosomal subunit protein bL17 from Halothermothrix orenii (strain H 168 / OCM 544 / DSM 9562).